The chain runs to 508 residues: GTPase Obg (508 aa).

Residues 2 to 159 (ARFVDRVVLH…HDVILELKSM (158 aa)) enclose the Obg domain. The OBG-type G domain maps to 160-341 (ADIGLVGFPS…LKYAMLDLVQ (182 aa)). GTP contacts are provided by residues 166 to 173 (GFPSAGKS), 191 to 195 (FTTLQ), 212 to 215 (DVPG), 292 to 295 (NKAD), and 322 to 324 (SAV). The Mg(2+) site is built by S173 and T193. One can recognise an OCT domain in the interval 364–444 (DARKKNKDFE…IGEVSFEWEP (81 aa)).

It belongs to the TRAFAC class OBG-HflX-like GTPase superfamily. OBG GTPase family. As to quaternary structure, monomer. Mg(2+) serves as cofactor.

It is found in the cytoplasm. Functionally, an essential GTPase which binds GTP, GDP and possibly (p)ppGpp with moderate affinity, with high nucleotide exchange rates and a fairly low GTP hydrolysis rate. Plays a role in control of the cell cycle, stress response, ribosome biogenesis and in those bacteria that undergo differentiation, in morphogenesis control. The protein is GTPase Obg of Corynebacterium diphtheriae (strain ATCC 700971 / NCTC 13129 / Biotype gravis).